We begin with the raw amino-acid sequence, 578 residues long: Cholesterol oxidase (578 aa).

FAD is bound by residues Gly-15, Glu-34, Gly-85, Ala-90, and Val-230. His-470 acts as the Proton acceptor in catalysis. Gly-503 lines the FAD pocket. The disordered stretch occupies residues 529–551 (WPNKGETDRRPPQGEPYRRLAPI). The span at 533–546 (GETDRRPPQGEPYR) shows a compositional bias: basic and acidic residues.

It belongs to the GMC oxidoreductase family. It depends on FAD as a cofactor.

It localises to the secreted. The catalysed reaction is cholesterol + O2 = cholest-5-en-3-one + H2O2. It carries out the reaction cholest-5-en-3-one = cholest-4-en-3-one. The protein operates within steroid metabolism; cholesterol degradation. In terms of biological role, bifunctional enzyme that catalyzes the oxidation and isomerization of cholesterol to cholestenone (cholest-4-en-3-one), an initial step in the cholesterol degradation process. Contributes to virulence. This is Cholesterol oxidase (choD) from Mycobacterium tuberculosis (strain CDC 1551 / Oshkosh).